The sequence spans 83 residues: Mitochondrial import inner membrane translocase subunit Tim8 (83 aa).

Positions 35-60 (CWDVCFSDYRPPSKMDGKTQTCIQNC) match the Twin CX3C motif motif. 2 disulfides stabilise this stretch: Cys-35–Cys-60 and Cys-39–Cys-56.

It belongs to the small Tim family. In terms of assembly, heterohexamer; composed of 3 copies of ddp-1/tim-8 and 3 copies of tin-13/tim-13, named soluble 70 kDa complex. Associates with the TIM22 complex, whose core is composed of tim-22.

It is found in the mitochondrion inner membrane. Functionally, mitochondrial intermembrane chaperone that participates in the import and insertion of some multi-pass transmembrane proteins into the mitochondrial inner membrane. Also required for the transfer of beta-barrel precursors from the TOM complex to the sorting and assembly machinery (SAM complex) of the outer membrane. Acts as a chaperone-like protein that protects the hydrophobic precursors from aggregation and guide them through the mitochondrial intermembrane space. The ddp-1/tim-8-tim-13 complex mediates the import of some proteins while the predominant tim-9/tin-9.1-tim-10/tin-10 70 kDa complex mediates the import of much more proteins. In Caenorhabditis briggsae, this protein is Mitochondrial import inner membrane translocase subunit Tim8.